The primary structure comprises 339 residues: Anthranilate phosphoribosyltransferase (339 aa).

5-phospho-alpha-D-ribose 1-diphosphate-binding positions include Gly-82, 85–86 (GD), Thr-90, 92–95 (NIST), 110–118 (KHGNRSASG), and Ser-122. Gly-82 is an anthranilate binding site. Residue Ser-94 participates in Mg(2+) binding. Residue Asn-113 participates in anthranilate binding. Anthranilate is bound at residue Arg-168. 2 residues coordinate Mg(2+): Asp-226 and Glu-227.

It belongs to the anthranilate phosphoribosyltransferase family. Homodimer. Mg(2+) serves as cofactor.

The enzyme catalyses N-(5-phospho-beta-D-ribosyl)anthranilate + diphosphate = 5-phospho-alpha-D-ribose 1-diphosphate + anthranilate. It functions in the pathway amino-acid biosynthesis; L-tryptophan biosynthesis; L-tryptophan from chorismate: step 2/5. Catalyzes the transfer of the phosphoribosyl group of 5-phosphorylribose-1-pyrophosphate (PRPP) to anthranilate to yield N-(5'-phosphoribosyl)-anthranilate (PRA). This Methanosphaerula palustris (strain ATCC BAA-1556 / DSM 19958 / E1-9c) protein is Anthranilate phosphoribosyltransferase.